The sequence spans 461 residues: Elongation factor 1-alpha (461 aa).

Residues lysine 5 to threonine 242 form the tr-type G domain. Residues glycine 14–serine 21 are G1. Glycine 14–serine 21 lines the GTP pocket. A G2 region spans residues glycine 70–aspartate 74. The interval aspartate 91–glycine 94 is G3. Residues aspartate 91–histidine 95 and asparagine 153–aspartate 156 contribute to the GTP site. The interval asparagine 153–aspartate 156 is G4. The segment at serine 194 to tryptophan 196 is G5. Residues glutamate 301 and glutamate 374 each carry the 5-glutamyl glycerylphosphorylethanolamine modification.

It belongs to the TRAFAC class translation factor GTPase superfamily. Classic translation factor GTPase family. EF-Tu/EF-1A subfamily.

It localises to the cytoplasm. Functionally, this protein promotes the GTP-dependent binding of aminoacyl-tRNA to the A-site of ribosomes during protein biosynthesis. The chain is Elongation factor 1-alpha from Apis mellifera (Honeybee).